The chain runs to 907 residues: Leucine--tRNA ligase (907 aa).

The 'HIGH' region motif lies at 42–52; sequence PYPSGKLHMGH. Residues 651-655 carry the 'KMSKS' region motif; it reads TMSKS. Lys-654 provides a ligand contact to ATP.

The protein belongs to the class-I aminoacyl-tRNA synthetase family.

The protein localises to the cytoplasm. The catalysed reaction is tRNA(Leu) + L-leucine + ATP = L-leucyl-tRNA(Leu) + AMP + diphosphate. The sequence is that of Leucine--tRNA ligase from Verminephrobacter eiseniae (strain EF01-2).